Reading from the N-terminus, the 178-residue chain is Peptide methionine sulfoxide reductase MsrA (178 aa).

Cys11 is an active-site residue.

The protein belongs to the MsrA Met sulfoxide reductase family.

It carries out the reaction L-methionyl-[protein] + [thioredoxin]-disulfide + H2O = L-methionyl-(S)-S-oxide-[protein] + [thioredoxin]-dithiol. The catalysed reaction is [thioredoxin]-disulfide + L-methionine + H2O = L-methionine (S)-S-oxide + [thioredoxin]-dithiol. Has an important function as a repair enzyme for proteins that have been inactivated by oxidation. Catalyzes the reversible oxidation-reduction of methionine sulfoxide in proteins to methionine. This chain is Peptide methionine sulfoxide reductase MsrA, found in Natronomonas pharaonis (strain ATCC 35678 / DSM 2160 / CIP 103997 / JCM 8858 / NBRC 14720 / NCIMB 2260 / Gabara) (Halobacterium pharaonis).